Here is a 106-residue protein sequence, read N- to C-terminus: uncharacterized protein (106 aa).

A run of 2 helical transmembrane segments spans residues 17–37 (AGLL…AVLV) and 55–75 (FSSS…FMIF).

Its subcellular location is the membrane. This is an uncharacterized protein from Saccharomyces cerevisiae (strain ATCC 204508 / S288c) (Baker's yeast).